Reading from the N-terminus, the 199-residue chain is Pyridoxal 5'-phosphate synthase subunit PdxT (199 aa).

52–54 contributes to the L-glutamine binding site; that stretch reads GES. Cys84 (nucleophile) is an active-site residue. L-glutamine contacts are provided by residues Arg115 and 143–144; that span reads IR. Catalysis depends on charge relay system residues His179 and Glu181.

This sequence belongs to the glutaminase PdxT/SNO family. In the presence of PdxS, forms a dodecamer of heterodimers. Only shows activity in the heterodimer.

The catalysed reaction is aldehydo-D-ribose 5-phosphate + D-glyceraldehyde 3-phosphate + L-glutamine = pyridoxal 5'-phosphate + L-glutamate + phosphate + 3 H2O + H(+). It catalyses the reaction L-glutamine + H2O = L-glutamate + NH4(+). Its pathway is cofactor biosynthesis; pyridoxal 5'-phosphate biosynthesis. Functionally, catalyzes the hydrolysis of glutamine to glutamate and ammonia as part of the biosynthesis of pyridoxal 5'-phosphate. The resulting ammonia molecule is channeled to the active site of PdxS. The sequence is that of Pyridoxal 5'-phosphate synthase subunit PdxT from Methanosarcina acetivorans (strain ATCC 35395 / DSM 2834 / JCM 12185 / C2A).